Reading from the N-terminus, the 199-residue chain is Transgelin-2 (199 aa).

Residue Ala-2 is modified to N-acetylalanine. The residue at position 11 (Ser-11) is a Phosphoserine. An N6-acetyllysine mark is found at Lys-17 and Lys-20. A Calponin-homology (CH) domain is found at 24–136 (PDLEQILIQW…RTLMNLGGLA (113 aa)). The residue at position 163 (Ser-163) is a Phosphoserine. Residue Lys-171 forms a Glycyl lysine isopeptide (Lys-Gly) (interchain with G-Cter in SUMO2) linkage. A Calponin-like repeat occupies 174 to 199 (IGLQMGTNRGASQAGMTGYGMPRQIL). Residue Thr-180 is modified to Phosphothreonine. Omega-N-methylarginine is present on residues Arg-182 and Arg-196.

It belongs to the calponin family.

The protein is Transgelin-2 (Tagln2) of Rattus norvegicus (Rat).